The primary structure comprises 36 residues: Termicin (36 aa).

Intrachain disulfides connect Cys2–Cys24, Cys7–Cys29, and Cys11–Cys31. Gly36 carries the glycine amide modification.

Expressed in salivary glands and hemocytes.

Its subcellular location is the secreted. Functionally, weak activity against Gram-positive bacteria B.megaterium, S.pyogenes and M.luteus, strong activity against yeasts C.albicans, C.neoformans and S.cerevisiae and filamentous fungi F.oxysporum, F.culmorum, N.crassa and N.hematococca. Less active against filamentous fungus T.viride. Inactive against Gram-positive bacteria A.viridans and S.aureus, filamentous fungi A.fumigatus and B.bassiana and yeast C.glabrata. The chain is Termicin from Pseudacanthotermes spiniger.